Here is a 279-residue protein sequence, read N- to C-terminus: Tryptophan synthase alpha chain (279 aa).

Active-site proton acceptor residues include E50 and D61.

Belongs to the TrpA family. Tetramer of two alpha and two beta chains.

The catalysed reaction is (1S,2R)-1-C-(indol-3-yl)glycerol 3-phosphate + L-serine = D-glyceraldehyde 3-phosphate + L-tryptophan + H2O. It functions in the pathway amino-acid biosynthesis; L-tryptophan biosynthesis; L-tryptophan from chorismate: step 5/5. Its function is as follows. The alpha subunit is responsible for the aldol cleavage of indoleglycerol phosphate to indole and glyceraldehyde 3-phosphate. The sequence is that of Tryptophan synthase alpha chain from Rhizobium etli (strain ATCC 51251 / DSM 11541 / JCM 21823 / NBRC 15573 / CFN 42).